The chain runs to 291 residues: N-acetylmannosamine kinase (291 aa).

ATP is bound by residues 5–12 (AIDIGGTK) and 132–139 (GVGGGVVS). Residues His-156, Cys-166, Cys-168, and Cys-173 each contribute to the Zn(2+) site.

Belongs to the ROK (NagC/XylR) family. NanK subfamily. Homodimer.

The enzyme catalyses an N-acyl-D-mannosamine + ATP = an N-acyl-D-mannosamine 6-phosphate + ADP + H(+). It functions in the pathway amino-sugar metabolism; N-acetylneuraminate degradation; D-fructose 6-phosphate from N-acetylneuraminate: step 2/5. Functionally, catalyzes the phosphorylation of N-acetylmannosamine (ManNAc) to ManNAc-6-P. The sequence is that of N-acetylmannosamine kinase from Escherichia coli O139:H28 (strain E24377A / ETEC).